A 450-amino-acid polypeptide reads, in one-letter code: Glucose-6-phosphate isomerase (450 aa).

Position 39 is a phosphothreonine (threonine 39). The active-site Proton donor is the glutamate 291. Residues histidine 312 and lysine 426 contribute to the active site.

Belongs to the GPI family.

It localises to the cytoplasm. The catalysed reaction is alpha-D-glucose 6-phosphate = beta-D-fructose 6-phosphate. It participates in carbohydrate biosynthesis; gluconeogenesis. The protein operates within carbohydrate degradation; glycolysis; D-glyceraldehyde 3-phosphate and glycerone phosphate from D-glucose: step 2/4. Functionally, catalyzes the reversible isomerization of glucose-6-phosphate to fructose-6-phosphate. The protein is Glucose-6-phosphate isomerase of Bacillus mycoides (strain KBAB4) (Bacillus weihenstephanensis).